The sequence spans 215 residues: Pentapeptide repeat protein QnrB4 (215 aa).

2 Pentapeptide repeat domains span residues 25 to 104 (TFFN…SFMN) and 117 to 191 (ITNT…RGVD).

This sequence belongs to the pentapeptide repeat protein family.

In terms of biological role, probably plays a role in resistance to quinolone antibiotics. Only inhibits ATP-dependent DNA supercoiling by E.coli gyrase at high concentration (30 uM). Protects E.coli gyrase supercoiling activity from inhibition by fluoroquinolones (ciprofloxacin) at 0.1 uM, does not protect M.tuberculosis gyrase activity. The polypeptide is Pentapeptide repeat protein QnrB4 (Escherichia coli).